Consider the following 1070-residue polypeptide: Probable arabinosyltransferase C (1070 aa).

12 helical membrane-spanning segments follow: residues Ile-10–Leu-32, Leu-210–Leu-232, Ser-247–Val-269, Val-399–Gly-421, Ile-425–Leu-442, Phe-449–Arg-471, Ser-512–Leu-534, Ser-547–Thr-564, Val-574–Arg-596, Val-603–Val-625, Thr-645–Val-664, and Ser-685–Ile-707.

This sequence belongs to the emb family.

The protein localises to the cell membrane. Its function is as follows. Arabinosyl transferase responsible for the polymerization of arabinose into the arabinan of arabinogalactan. This is Probable arabinosyltransferase C (embC) from Mycobacterium leprae (strain TN).